A 123-amino-acid chain; its full sequence is Small ribosomal subunit protein uS12 (123 aa).

Asp89 bears the 3-methylthioaspartic acid mark. The tract at residues 101–123 (SLDTAGVKDRKQSRSKYGAKRPK) is disordered. Over residues 113 to 123 (SRSKYGAKRPK) the composition is skewed to basic residues.

The protein belongs to the universal ribosomal protein uS12 family. Part of the 30S ribosomal subunit. Contacts proteins S8 and S17. May interact with IF1 in the 30S initiation complex.

Its function is as follows. With S4 and S5 plays an important role in translational accuracy. Interacts with and stabilizes bases of the 16S rRNA that are involved in tRNA selection in the A site and with the mRNA backbone. Located at the interface of the 30S and 50S subunits, it traverses the body of the 30S subunit contacting proteins on the other side and probably holding the rRNA structure together. The combined cluster of proteins S8, S12 and S17 appears to hold together the shoulder and platform of the 30S subunit. The sequence is that of Small ribosomal subunit protein uS12 from Laribacter hongkongensis (strain HLHK9).